We begin with the raw amino-acid sequence, 252 residues long: Putative peptide zinc metalloprotease protein YydH (252 aa).

The next 2 membrane-spanning stretches (helical) occupy residues 56–76 and 85–105; these read FFYL…IHLI and VFYG…NIVL. Position 106 (His-106) interacts with Zn(2+). The active site involves Glu-107. Residue His-110 participates in Zn(2+) binding. Helical transmembrane passes span 152–172, 181–201, and 231–251; these read IIVH…LELI, ALTM…IPIL, and IQII…LYIV.

Belongs to the peptidase M50B family. Zn(2+) is required as a cofactor.

It localises to the cell membrane. Functionally, required for production of the modified peptide YydF. May process the precursor form of YydF to release the active peptide (Potential). The protein is Putative peptide zinc metalloprotease protein YydH (yydH) of Bacillus subtilis (strain 168).